Consider the following 128-residue polypeptide: MFAKTLASLAVIGSAAAYVPMMSMDMGRREVVQAGAAAAAVTPFLSGAPAGAAMDKSAKAPQITIFDHRGCSRAPKESTGGKAGGQDDEMMVKVASTKVTVSESDAAKKLQEFITFEKGIDGPFTSKN.

A chloroplast-targeting transit peptide spans 1–52 (MFAKTLASLAVIGSAAAYVPMMSMDMGRREVVQAGAAAAAVTPFLSGAPAGA). The residue at position 56 (K56) is a 5-hydroxylysine. Positions 70–89 (GCSRAPKESTGGKAGGQDDE) are disordered. Residues C71, R73, 77-78 (ES), and K93 contribute to the 15,16-dihydrobiliverdin site.

Belongs to the phycoerythrin family. In terms of assembly, heterotetramer of 2 different alpha chains and 2 identical beta chains. The subunit composition could comprise of any combination of 2 out of 4 different alpha units with an invariant beta unit. Contains one covalently linked 15,16-dihydrobiliverdin chromophore.

The protein localises to the plastid. It is found in the chloroplast thylakoid membrane. In terms of biological role, light-harvesting photosynthetic tetrapyrrole chromophore-protein from the phycobiliprotein complex. The protein is Phycoerythrin alpha-3 chain, chloroplastic (cpeA3) of Rhodomonas sp. (strain CS 24) (Chroomonas sp. (strain CS24)).